The following is a 347-amino-acid chain: MFIRNCWYVAAWDTEIPAEGLFHRTLLNEPVLLYRDTQGRVVALENRCCHRSAPLHIGRQEGDCVRCLYHGLKFNPSGACVEIPGQEQIPPKTCIKSYPVVERNRLVWIWMGDPARANPDDIVDYFWHDSPEWRMKPGYIHYQANYKLIVDNLLDFTHLAWVHPTTLGTDSAASLKPVIERDTTGTGKLTITRWYLNDDMSNLHKGVAKFEGKADRWQIYQWSPPALLRMDTGSAPTGTGAPEGRRVPEAVQFRHTSIQTPETETTSHYWFCQARNFDLDDEALTEKIYQGVVVAFEEDRTMIEAHEKILSQVPDRPMVPIAADAGLNQGRWLLDRLLKAENGGTAP.

In terms of domain architecture, Rieske spans 7 to 109 (WYVAAWDTEI…VVERNRLVWI (103 aa)). [2Fe-2S] cluster-binding residues include Cys48, His50, Cys67, and His70.

As to quaternary structure, homotetramer. Part of the p-toluenesulfonate methyl-monooxygenase complex TsaBM, comprising the reductase TsaB and the oxygenase TsaM. Requires [2Fe-2S] cluster as cofactor.

The enzyme catalyses toluene-4-sulfonate + NADH + O2 + H(+) = 4-(hydroxymethyl)benzenesulfonate + NAD(+) + H2O. Functionally, involved in the toluene-4-sulfonate degradation pathway. Does not discriminate between the sulfonate and the carboxyl substituents and can also be involved in the p-toluenecarboxylate degradation pathway. Can use toluene-4-sulfonate, p-toluate, m-toluate and 4-ethylbenzoate as substrates, but not p-xylene, toluene and p-cresol. Also catalyzes the demethylation of 4-methoxybenzoate to 4-hydroxybenzoate. The sequence is that of Toluene-4-sulfonate monooxygenase system iron-sulfur subunit TsaM1 (tsaM1) from Comamonas testosteroni (Pseudomonas testosteroni).